A 72-amino-acid chain; its full sequence is Translation initiation factor IF-1 (72 aa).

One can recognise an S1-like domain in the interval 1-72; sequence MAKDDVIEVD…DKGRITFRYK (72 aa).

The protein belongs to the IF-1 family. In terms of assembly, component of the 30S ribosomal translation pre-initiation complex which assembles on the 30S ribosome in the order IF-2 and IF-3, IF-1 and N-formylmethionyl-tRNA(fMet); mRNA recruitment can occur at any time during PIC assembly.

The protein resides in the cytoplasm. Functionally, one of the essential components for the initiation of protein synthesis. Stabilizes the binding of IF-2 and IF-3 on the 30S subunit to which N-formylmethionyl-tRNA(fMet) subsequently binds. Helps modulate mRNA selection, yielding the 30S pre-initiation complex (PIC). Upon addition of the 50S ribosomal subunit IF-1, IF-2 and IF-3 are released leaving the mature 70S translation initiation complex. In Nitratiruptor sp. (strain SB155-2), this protein is Translation initiation factor IF-1.